We begin with the raw amino-acid sequence, 275 residues long: uncharacterized protein (275 aa).

6 consecutive transmembrane segments (helical) span residues 25–45 (LGYF…FMTA), 70–90 (LLFF…LSAI), 107–127 (IGNF…LRFV), 149–169 (FGQW…IVQF), 203–223 (IARA…AMTA), and 247–267 (ILSI…MKGI).

It localises to the cell membrane. This is an uncharacterized protein from Bacillus subtilis (strain 168).